The following is a 510-amino-acid chain: Nectin-4 (510 aa).

A signal peptide spans 1-31; that stretch reads MPLSLGAEMWGPEAWLLLLLLLASFTGRCPA. In terms of domain architecture, Ig-like V-type spans 32-144; the sequence is GELETSDVVT…GSFQARLRLR (113 aa). Topologically, residues 32–349 are extracellular; sequence GELETSDVVT…GKQVDLVSAS (318 aa). 3 disulfide bridges follow: Cys-52/Cys-127, Cys-171/Cys-223, and Cys-270/Cys-315. Ig-like C2-type domains follow at residues 148-237 and 248-331; these read PPLP…QRIT and ASVR…VTVD. Asn-281 carries an N-linked (GlcNAc...) asparagine glycan. The chain crosses the membrane as a helical span at residues 350 to 370; sequence VVVVGVIAALLFCLLVVVVVL. The Cytoplasmic portion of the chain corresponds to 371-510; it reads MSRYHRRKAQ…IYINGRGHLV (140 aa). Over residues 399-412 the composition is skewed to basic and acidic residues; the sequence is RRLHSHHTDPRSQP. 2 disordered regions span residues 399–447 and 457–476; these read RRLH…SYST and QTEL…DQDE.

The protein belongs to the nectin family. As to quaternary structure, self-associates. Interacts via its Ig-like V-type domain with NECTIN1 Ig-like V-type domain. Interacts via its C-terminus with AFDN. In terms of assembly, (Microbial infection) Interacts (via N-terminus) with measles virus hemagglutinin protein. In terms of processing, the soluble form is produced by proteolytic cleavage at the cell surface (shedding), probably by ADAM17/TACE. In terms of tissue distribution, predominantly expressed in placenta. Not detected in normal breast epithelium but expressed in breast carcinoma.

It is found in the cell membrane. The protein localises to the cell junction. It localises to the adherens junction. The protein resides in the secreted. Functionally, seems to be involved in cell adhesion through trans-homophilic and -heterophilic interactions, the latter including specifically interactions with NECTIN1. Does not act as receptor for alpha-herpesvirus entry into cells. In terms of biological role, (Microbial infection) Acts as a receptor for measles virus. The chain is Nectin-4 from Homo sapiens (Human).